Consider the following 177-residue polypeptide: Large ribosomal subunit protein uL6 (177 aa).

This sequence belongs to the universal ribosomal protein uL6 family. In terms of assembly, part of the 50S ribosomal subunit.

This protein binds to the 23S rRNA, and is important in its secondary structure. It is located near the subunit interface in the base of the L7/L12 stalk, and near the tRNA binding site of the peptidyltransferase center. The chain is Large ribosomal subunit protein uL6 from Beijerinckia indica subsp. indica (strain ATCC 9039 / DSM 1715 / NCIMB 8712).